An 89-amino-acid polypeptide reads, in one-letter code: Gallinacin-13 (89 aa).

A signal peptide spans 1 to 23 (MRILQLLFAIVVILLLQDAPARG). Disulfide bonds link Cys-30–Cys-58, Cys-37–Cys-51, and Cys-41–Cys-59. The interval 66 to 89 (PFSNPKHSVLHTAEQDPSPSLGGT) is disordered.

This sequence belongs to the beta-defensin family. In terms of tissue distribution, expressed in the liver, gall bladder, kidney, small intestine, spleen, testis, ovary and male and female reproductive tracts. Not detected in the ovarian stroma and the theca and granulosa layers of the ovarian follicle.

It localises to the secreted. The protein localises to the cytoplasmic granule. Functionally, has bactericidal activity. Potent activity against E.coli, L.monocytogenes, S.typhimurium and S.pyogenes but mot against S.aureus. In terms of biological role, has bactericidal activity. The chain is Gallinacin-13 (GAL13) from Gallus gallus (Chicken).